Reading from the N-terminus, the 611-residue chain is Protein Spindly-A (611 aa).

The stretch at M1 to L390 forms a coiled coil. Positions T487–Q611 are disordered. Residues T493–D511 are compositionally biased toward basic and acidic residues. A compositionally biased stretch (polar residues) spans H552 to D567. Residues S570 to K583 show a composition bias toward basic and acidic residues. Residues P602 to Q611 are compositionally biased toward polar residues.

The protein belongs to the Spindly family.

The protein resides in the chromosome. The protein localises to the centromere. Its subcellular location is the kinetochore. Its function is as follows. Required for the localization of dynein and dynactin to the mitotic kintochore. Dynein is believed to control the initial lateral interaction between the kinetochore and spindle microtubules and to facilitate the subsequent formation of end-on kinetochore-microtubule attachments mediated by the NDC80 complex. The protein is Protein Spindly-A (spdl1-a) of Xenopus laevis (African clawed frog).